The following is a 317-amino-acid chain: Ribonuclease 3-like protein 2 (317 aa).

The tract at residues 1–26 is disordered; the sequence is MAPPPAMKPASRKRGPPAPDPVELPP. Positions 16–26 are enriched in pro residues; sequence PPAPDPVELPP. One can recognise an RNase III domain in the interval 37 to 185; that stretch reads AARVERLLRY…IAAAVYVDCK (149 aa). Mg(2+) contacts are provided by glutamate 74, aspartate 171, and glutamate 174. Residues 211–274 enclose the DRBM domain; that stretch reads QPVTMLHELC…ARDATRKLAG (64 aa).

Mg(2+) is required as a cofactor. Mn(2+) serves as cofactor.

Cleaves double-stranded RNA (dsRNA). In Oryza sativa subsp. japonica (Rice), this protein is Ribonuclease 3-like protein 2.